A 240-amino-acid polypeptide reads, in one-letter code: Ribonuclease PH (240 aa).

Phosphate is bound by residues Arg87 and 125 to 127 (GTR).

It belongs to the RNase PH family. Homohexameric ring arranged as a trimer of dimers.

The enzyme catalyses tRNA(n+1) + phosphate = tRNA(n) + a ribonucleoside 5'-diphosphate. Functionally, phosphorolytic 3'-5' exoribonuclease that plays an important role in tRNA 3'-end maturation. Removes nucleotide residues following the 3'-CCA terminus of tRNAs; can also add nucleotides to the ends of RNA molecules by using nucleoside diphosphates as substrates, but this may not be physiologically important. Probably plays a role in initiation of 16S rRNA degradation (leading to ribosome degradation) during starvation. This chain is Ribonuclease PH, found in Pseudomonas syringae pv. tomato (strain ATCC BAA-871 / DC3000).